Reading from the N-terminus, the 446-residue chain is Phosphoglucosamine mutase (446 aa).

Serine 99 functions as the Phosphoserine intermediate in the catalytic mechanism. Serine 99, aspartate 242, aspartate 244, and aspartate 246 together coordinate Mg(2+). Serine 99 bears the Phosphoserine mark.

Belongs to the phosphohexose mutase family. The cofactor is Mg(2+). Post-translationally, activated by phosphorylation.

It carries out the reaction alpha-D-glucosamine 1-phosphate = D-glucosamine 6-phosphate. Catalyzes the conversion of glucosamine-6-phosphate to glucosamine-1-phosphate. The polypeptide is Phosphoglucosamine mutase (Campylobacter hominis (strain ATCC BAA-381 / DSM 21671 / CCUG 45161 / LMG 19568 / NCTC 13146 / CH001A)).